The following is a 765-amino-acid chain: Probable exo-1,4-beta-xylosidase bxlB (765 aa).

Positions 1–25 (MYSSNSRRAASILACIVSLTQLGFA) are cleaved as a signal peptide. Asn67 and Asn107 each carry an N-linked (GlcNAc...) asparagine glycan. The active site involves Asp293. N-linked (GlcNAc...) asparagine glycosylation is found at Asn345, Asn412, Asn423, Asn464, and Asn761.

This sequence belongs to the glycosyl hydrolase 3 family.

The protein resides in the secreted. The enzyme catalyses Hydrolysis of (1-&gt;4)-beta-D-xylans, to remove successive D-xylose residues from the non-reducing termini.. It functions in the pathway glycan degradation; xylan degradation. Its function is as follows. Xylan 1,4-beta-xylosidase involved in the hydrolysis of xylan, a major structural heterogeneous polysaccharide found in plant biomass representing the second most abundant polysaccharide in the biosphere, after cellulose. In Aspergillus terreus (strain NIH 2624 / FGSC A1156), this protein is Probable exo-1,4-beta-xylosidase bxlB (bxlB).